A 501-amino-acid chain; its full sequence is 2,3-bisphosphoglycerate-independent phosphoglycerate mutase (501 aa).

Mn(2+) contacts are provided by D10 and S60. S60 serves as the catalytic Phosphoserine intermediate. Residues H121, 151–152, R182, R188, 256–259, and K329 contribute to the substrate site; these read RD and RPDR. D394, H398, D435, H436, and H453 together coordinate Mn(2+).

Belongs to the BPG-independent phosphoglycerate mutase family. Monomer. Mn(2+) serves as cofactor.

It carries out the reaction (2R)-2-phosphoglycerate = (2R)-3-phosphoglycerate. It functions in the pathway carbohydrate degradation; glycolysis; pyruvate from D-glyceraldehyde 3-phosphate: step 3/5. Catalyzes the interconversion of 2-phosphoglycerate and 3-phosphoglycerate. In Mycoplasmopsis synoviae (strain 53) (Mycoplasma synoviae), this protein is 2,3-bisphosphoglycerate-independent phosphoglycerate mutase.